Reading from the N-terminus, the 86-residue chain is Neurotoxin homolog NL1 (86 aa).

The signal sequence occupies residues 1 to 21; it reads MKTLLLTLVVVTMVCMDLGYT. Cystine bridges form between Cys24–Cys45, Cys38–Cys62, Cys66–Cys78, and Cys79–Cys84.

The protein belongs to the three-finger toxin family. Short-chain subfamily. Orphan group VIII (haditoxin) sub-subfamily. In terms of assembly, homodimer; non-covalently linked. In terms of tissue distribution, expressed by the venom gland.

It localises to the secreted. In terms of biological role, antagonist of muscle and neuronal nicotinic acetylcholine receptors (nAChR) with highest affinity for neuronal alpha-7/CHRNA7 nAChRs. The polypeptide is Neurotoxin homolog NL1 (Naja atra (Chinese cobra)).